We begin with the raw amino-acid sequence, 341 residues long: 5-formaminoimidazole-4-carboxamide-1-(beta)-D-ribofuranosyl 5'-monophosphate synthetase (341 aa).

5-amino-1-(5-phospho-beta-D-ribosyl)imidazole-4-carboxamide-binding residues include H10 and T77. The ATP-grasp domain maps to 106 to 317; it reads DREMKEKLMR…YYNLLFNETM (212 aa). Residues 132 to 188 and E210 contribute to the ATP site; that span reads EKLS…VLAY. A 5-amino-1-(5-phospho-beta-D-ribosyl)imidazole-4-carboxamide-binding site is contributed by N238. Positions 277 and 290 each coordinate Mg(2+).

Belongs to the phosphohexose mutase family. The cofactor is Mg(2+). Requires Mn(2+) as cofactor.

It catalyses the reaction 5-amino-1-(5-phospho-beta-D-ribosyl)imidazole-4-carboxamide + formate + ATP = 5-formamido-1-(5-phospho-D-ribosyl)imidazole-4-carboxamide + ADP + phosphate. It participates in purine metabolism; IMP biosynthesis via de novo pathway; 5-formamido-1-(5-phospho-D-ribosyl)imidazole-4-carboxamide from 5-amino-1-(5-phospho-D-ribosyl)imidazole-4-carboxamide (formate route): step 1/1. Functionally, catalyzes the ATP- and formate-dependent formylation of 5-aminoimidazole-4-carboxamide-1-beta-d-ribofuranosyl 5'-monophosphate (AICAR) to 5-formaminoimidazole-4-carboxamide-1-beta-d-ribofuranosyl 5'-monophosphate (FAICAR) in the absence of folates. The sequence is that of 5-formaminoimidazole-4-carboxamide-1-(beta)-D-ribofuranosyl 5'-monophosphate synthetase from Nitrosopumilus maritimus (strain SCM1).